The following is a 208-amino-acid chain: Glycerol-3-phosphate acyltransferase (208 aa).

The next 5 helical transmembrane spans lie at 3-23 (ILLAALVAYLIGSVSFAVVVS), 51-71 (KAAILTLVGDAFKGWIAVWLA), 78-98 (DVAIAWVAIAVFLGHLYPVFF), 115-135 (AVHPVLGLATALTWLIVAFFF), and 140-160 (LAALVAAVFAPVFDVFLFGMP).

The protein belongs to the PlsY family. Probably interacts with PlsX.

Its subcellular location is the cell inner membrane. The catalysed reaction is an acyl phosphate + sn-glycerol 3-phosphate = a 1-acyl-sn-glycero-3-phosphate + phosphate. It participates in lipid metabolism; phospholipid metabolism. Functionally, catalyzes the transfer of an acyl group from acyl-phosphate (acyl-PO(4)) to glycerol-3-phosphate (G3P) to form lysophosphatidic acid (LPA). This enzyme utilizes acyl-phosphate as fatty acyl donor, but not acyl-CoA or acyl-ACP. The chain is Glycerol-3-phosphate acyltransferase from Burkholderia orbicola (strain MC0-3).